The sequence spans 275 residues: Myoblast determination protein 1 homolog 2 (275 aa).

The bHLH domain occupies 84 to 135 (DRRKAATMRERRRLGKVNDAFENLKRCTSNNPNQRLPKVEILRNAISYIESL). Positions 232–265 (SGQEGSEGSPCSPQEGSILSRNGGTVPSPTNCPQ) are enriched in polar residues. The segment at 232–275 (SGQEGSEGSPCSPQEGSILSRNGGTVPSPTNCPQPSHDPIYQVL) is disordered.

In terms of assembly, efficient DNA binding requires dimerization with another bHLH protein.

It is found in the nucleus. In terms of biological role, may act as a transcriptional activator that promotes transcription of muscle-specific target genes and plays a role in muscle differentiation. This Oncorhynchus mykiss (Rainbow trout) protein is Myoblast determination protein 1 homolog 2 (myod2).